The following is a 353-amino-acid chain: Protein RecA (353 aa).

Position 80–87 (G80–T87) interacts with ATP.

Belongs to the RecA family.

The protein localises to the cytoplasm. Functionally, can catalyze the hydrolysis of ATP in the presence of single-stranded DNA, the ATP-dependent uptake of single-stranded DNA by duplex DNA, and the ATP-dependent hybridization of homologous single-stranded DNAs. It interacts with LexA causing its activation and leading to its autocatalytic cleavage. This Chlorobium chlorochromatii (strain CaD3) protein is Protein RecA.